A 186-amino-acid polypeptide reads, in one-letter code: MATGKQILNEAKDKMAKSGDALRRTLADIRAGRANASLLNGVKVDYYGAPTPLNQVASITIPEARQLLVTPYDESSLDNIEKAIYAANLGLTPQNDGSAIRILIPQLTEERRKELVKDVKAELEKAKVAVRNVRREAMDDLKKGNKDGDFNDDEFHDLEKKVQTETDNGIKNLENIAADKEKELMG.

The protein belongs to the RRF family.

The protein resides in the cytoplasm. Responsible for the release of ribosomes from messenger RNA at the termination of protein biosynthesis. May increase the efficiency of translation by recycling ribosomes from one round of translation to another. This chain is Ribosome-recycling factor, found in Limosilactobacillus reuteri (Lactobacillus reuteri).